The primary structure comprises 159 residues: Putative viral CXC chemokine 2 (159 aa).

Disulfide bonds link C50–C77 and C52–C93.

It belongs to the intercrine alpha (chemokine CxC) family.

This Human cytomegalovirus (strain Merlin) (HHV-5) protein is Putative viral CXC chemokine 2 (UL147).